Consider the following 146-residue polypeptide: Large-conductance mechanosensitive channel (146 aa).

Transmembrane regions (helical) follow at residues 17-37 (IDLA…DSLV), 40-60 (IIMP…QKFV), and 89-109 (LTIL…VKLI).

It belongs to the MscL family. As to quaternary structure, homopentamer.

It is found in the cell inner membrane. Its function is as follows. Channel that opens in response to stretch forces in the membrane lipid bilayer. May participate in the regulation of osmotic pressure changes within the cell. The sequence is that of Large-conductance mechanosensitive channel from Acinetobacter baylyi (strain ATCC 33305 / BD413 / ADP1).